The primary structure comprises 397 residues: MMRKLAILSVSSFLFVEALFQEYQCYGSSSNTRVLNELNYDNAGTNLYNELEMNYYGKQENWYSLKKNSRSLGENDDGNNEDNEKLRKPKHKKLKQPADGNPDPNANPNVDPNANPNVDPNANPNVDPNANPNANPNANPNANPNANPNANPNANPNANPNANPNANPNANPNANPNANPNANPNANPNANPNANPNVDPNANPNANPNANPNANPNANPNANPNANPNANPNANPNANPNANPNANPNANPNANPNANPNANPNANPNANPNKNNQGNGQGHNMPNDPNRNVDENANANSAVKNNNNEEPSDKHIKEYLNKIQNSLSTEWSPCSVTCGNGIQVRIKPGSANKPKDELDYANDIEKKICKMEKCSSVFNVVNSSIGLIMVLSFLFLN.

Residues 1-18 (MMRKLAILSVSSFLFVEA) form the signal peptide. Residues 69-313 (SRSLGENDDG…KNNNNEEPSD (245 aa)) form a disordered region. A required for the binding to heparan sulfate proteoglycans (HSPGs) on the surface of host hepatocytes region spans residues 85–92 (KLRKPKHK). Residues 93 to 97 (KLKQP) are region I; contains the proteolytic cleavage site. Residues 101–273 (NPDPNANPNV…PNANPNANPN (173 aa)) are compositionally biased toward low complexity. 42 consecutive repeat copies span residues 105–108 (NANP), 109–112 (NVDP), 113–116 (NANP), 117–120 (NVDP), 121–124 (NANP), 125–128 (NVDP), 129–132 (NANP), 133–136 (NANP), 137–140 (NANP), 141–144 (NANP), 145–148 (NANP), 149–152 (NANP), 153–156 (NANP), 157–160 (NANP), 161–164 (NANP), 165–168 (NANP), 169–172 (NANP), 173–176 (NANP), 177–180 (NANP), 181–184 (NANP), 185–188 (NANP), 189–192 (NANP), 193–196 (NANP), 197–200 (NVDP), 201–204 (NANP), 205–208 (NANP), 209–212 (NANP), 213–216 (NANP), 217–220 (NANP), 221–224 (NANP), 225–228 (NANP), 229–232 (NANP), 233–236 (NANP), 237–240 (NANP), 241–244 (NANP), 245–248 (NANP), 249–252 (NANP), 253–256 (NANP), 257–260 (NANP), 261–264 (NANP), 265–268 (NANP), and 269–272 (NANP). A 42 X 4 AA tandem repeats of N-[AV]-[ND]-P region spans residues 105–272 (NANPNVDPNA…NPNANPNANP (168 aa)). Positions 274–290 (KNNQGNGQGHNMPNDPN) are enriched in polar residues. Residues 295 to 309 (ENANANSAVKNNNNE) are compositionally biased toward low complexity. A TSP type-1 domain is found at 322–375 (KIQNSLSTEWSPCSVTCGNGIQVRIKPGSANKPKDELDYANDIEKKICKMEKCS). 2 cysteine pairs are disulfide-bonded: Cys-334–Cys-369 and Cys-338–Cys-374. Residue Thr-337 is glycosylated (O-linked (Fuc) threonine). The GPI-anchor amidated cysteine moiety is linked to residue Cys-374. A propeptide spans 375-397 (SSVFNVVNSSIGLIMVLSFLFLN) (removed in mature form).

It belongs to the plasmodium circumsporozoite protein family. In terms of processing, during host cell invasion, proteolytically cleaved at the cell membrane in the region I by a papain-like cysteine protease of parasite origin. Cleavage is triggered by the sporozoite contact with highly sulfated heparan sulfate proteoglycans (HSPGs) present on the host hepatocyte cell surface. Cleavage exposes the TSP type-1 (TSR) domain and is required for productive invasion of host hepatocytes but not for adhesion to the host cell membrane. Cleavage is dispensable for sporozoite development in the oocyst, motility and for traversal of host and vector cells. Post-translationally, O-glycosylated; maybe by POFUT2.

It localises to the cell membrane. It is found in the cytoplasm. In terms of biological role, essential sporozoite protein. In the mosquito vector, required for sporozoite development in the oocyst, migration through the vector hemolymph and entry into the vector salivary glands. In the vertebrate host, required for sporozoite migration through the host dermis and infection of host hepatocytes. Binds to highly sulfated heparan sulfate proteoglycans (HSPGs) on the surface of host hepatocytes. In the vertebrate host, binds to highly sulfated heparan sulfate proteoglycans (HSPGs) on the surface of host hepatocytes and is required for sporozoite invasion of the host hepatocytes. This chain is Circumsporozoite protein, found in Plasmodium falciparum (isolate NF54).